A 351-amino-acid polypeptide reads, in one-letter code: Dihydroorotate dehydrogenase (quinone) (351 aa).

Residues 67 to 71 (AGFDK) and Thr-91 contribute to the FMN site. Lys-71 contributes to the substrate binding site. Residue 116–120 (NAMGF) coordinates substrate. FMN contacts are provided by Asn-145 and Asn-178. Asn-178 provides a ligand contact to substrate. Residue Ser-181 is the Nucleophile of the active site. Asn-183 lines the substrate pocket. Positions 214 and 242 each coordinate FMN. 243–244 (NT) contributes to the substrate binding site. FMN is bound by residues Gly-262, Gly-291, and 312–313 (YS).

This sequence belongs to the dihydroorotate dehydrogenase family. Type 2 subfamily. In terms of assembly, monomer. The cofactor is FMN.

It localises to the cell membrane. It catalyses the reaction (S)-dihydroorotate + a quinone = orotate + a quinol. It functions in the pathway pyrimidine metabolism; UMP biosynthesis via de novo pathway; orotate from (S)-dihydroorotate (quinone route): step 1/1. In terms of biological role, catalyzes the conversion of dihydroorotate to orotate with quinone as electron acceptor. The sequence is that of Dihydroorotate dehydrogenase (quinone) from Helicobacter pylori (strain Shi470).